Reading from the N-terminus, the 61-residue chain is Small ribosomal subunit protein uS14 (61 aa).

The Zn(2+) site is built by cysteine 24, cysteine 27, cysteine 40, and cysteine 43.

This sequence belongs to the universal ribosomal protein uS14 family. Zinc-binding uS14 subfamily. Part of the 30S ribosomal subunit. Contacts proteins S3 and S10. Zn(2+) serves as cofactor.

Binds 16S rRNA, required for the assembly of 30S particles and may also be responsible for determining the conformation of the 16S rRNA at the A site. The protein is Small ribosomal subunit protein uS14 of Campylobacter hominis (strain ATCC BAA-381 / DSM 21671 / CCUG 45161 / LMG 19568 / NCTC 13146 / CH001A).